The primary structure comprises 268 residues: Tryptophan synthase alpha chain (268 aa).

Residues E49 and D60 each act as proton acceptor in the active site.

It belongs to the TrpA family. Tetramer of two alpha and two beta chains.

The catalysed reaction is (1S,2R)-1-C-(indol-3-yl)glycerol 3-phosphate + L-serine = D-glyceraldehyde 3-phosphate + L-tryptophan + H2O. Its pathway is amino-acid biosynthesis; L-tryptophan biosynthesis; L-tryptophan from chorismate: step 5/5. Functionally, the alpha subunit is responsible for the aldol cleavage of indoleglycerol phosphate to indole and glyceraldehyde 3-phosphate. The sequence is that of Tryptophan synthase alpha chain from Yersinia pseudotuberculosis serotype O:3 (strain YPIII).